A 342-amino-acid polypeptide reads, in one-letter code: Trace amine-associated receptor 3 (342 aa).

The Extracellular portion of the chain corresponds to 1 to 35 (MDLIYIPEDLSSCPKFGNKSCPPTNRSFRVRLIMY). 2 N-linked (GlcNAc...) asparagine glycosylation sites follow: Asn18 and Asn25. 2 cysteine pairs are disulfide-bonded: Cys21/Cys185 and Cys104/Cys189. The chain crosses the membrane as a helical span at residues 36-56 (LLMTGAMVITIFGNLVIIISI). Residues 57–68 (SHFKQLHSPTNF) lie on the Cytoplasmic side of the membrane. Residues 69–89 (LILSMATTDFLLGFVIMPYSM) form a helical membrane-spanning segment. The Extracellular segment spans residues 90-150 (VRSVESCWYF…TTMTASMIKR (61 aa)). A helical transmembrane segment spans residues 151–168 (LLFFCWAAPALFSFGLVL). The Cytoplasmic segment spans residues 169–172 (SEAN). The interval 173 to 186 (VSGMQSYEILIACF) is extracellular Loop 2 (ECL2). A helical membrane pass occupies residues 173–193 (VSGMQSYEILIACFNFCALTF). At 194–198 (NKFWG) the chain is on the extracellular side. A helical transmembrane segment spans residues 199–223 (TILFTTCFFTPGSIMVGIYGKIFIV). The Cytoplasmic portion of the chain corresponds to 224-256 (SRRHARALGNMPENTKGAGRNLSKKKDRKAAKT). Residues 257-277 (LGIVMGVFLACWLPCFLAVLI) form a helical membrane-spanning segment. The Extracellular portion of the chain corresponds to 278–286 (DPYLDYSTP). Residues 287–307 (IIVLDLLVWLGYFNSTCNPLI) traverse the membrane as a helical segment. The Cytoplasmic portion of the chain corresponds to 308–342 (HGFFYPWFRKALEHIVSGKIFRSNSDTANLFPEAH).

The protein belongs to the G-protein coupled receptor 1 family.

It localises to the cell membrane. Its function is as follows. Olfactory receptor activated by several primary trace amines, including isoamylamine. Activated by isoamylamine and cyclohexylamine, but not to the corresponding alcohols, isoamylalcohol and cyclohexanol. This receptor is probably mediated by the G(s)-class of G-proteins which activate adenylate cyclase. This is Trace amine-associated receptor 3 (Taar3) from Rattus norvegicus (Rat).